Reading from the N-terminus, the 426-residue chain is MNNLKNLRGTVDLFPDQLIKWQNVERILLEQLSRASIKEIRTPILEMTELFIRGIGEGTDVVSKEMYTFLDRGERSCTLRPEGTASVARALIQNGISSNPLQKLWYMGPMFRYERPQAGRQRQFHQLGVEFIGHDSVRSDVEIIALAWDILSKLGIKELNLEINTLGDTNDRSNFQKSFLKWLQANKDSLDLDSQNRISKNPLRILDSKNIQTKKVLENAPRLSNFLSEKSHSRYLELKRQLEVLNIPYVENFNLVRGLDYYTHTAFEITSGALGSQATVCGGGRYDDLIKQMGGPNTPAIGFAIGLERLILLAGKELEIPRNTDIYIINKGLIAESFAMDLSRKLRNYDLLVELDLSGASFSKQFKKANKLKSKSIIVIGDDEAVNGEFIIRLFGQSGNGNKEEVISFENDIKLENWINNNLLLK.

The protein belongs to the class-II aminoacyl-tRNA synthetase family. As to quaternary structure, homodimer.

Its subcellular location is the cytoplasm. The catalysed reaction is tRNA(His) + L-histidine + ATP = L-histidyl-tRNA(His) + AMP + diphosphate + H(+). The sequence is that of Histidine--tRNA ligase from Prochlorococcus marinus (strain MIT 9301).